The chain runs to 1286 residues: DNA-directed RNA polymerase subunit beta' (1286 aa).

Positions 58, 60, 73, and 76 each coordinate Zn(2+). Mg(2+) contacts are provided by Asp533, Asp535, and Asp537. Cys867, Cys944, Cys951, and Cys954 together coordinate Zn(2+).

The protein belongs to the RNA polymerase beta' chain family. In terms of assembly, the RNAP catalytic core consists of 2 alpha, 1 beta, 1 beta' and 1 omega subunit. When a sigma factor is associated with the core the holoenzyme is formed, which can initiate transcription. Mg(2+) is required as a cofactor. The cofactor is Zn(2+).

It catalyses the reaction RNA(n) + a ribonucleoside 5'-triphosphate = RNA(n+1) + diphosphate. In terms of biological role, DNA-dependent RNA polymerase catalyzes the transcription of DNA into RNA using the four ribonucleoside triphosphates as substrates. The chain is DNA-directed RNA polymerase subunit beta' from Tropheryma whipplei (strain TW08/27) (Whipple's bacillus).